Reading from the N-terminus, the 70-residue chain is Putative ankyrin repeat protein RC0502 (70 aa).

The stretch at 9-43 (KGRIPIHYATYSKQHEITQILILLQPGSEIDTVDN) is one ANK repeat.

In Rickettsia conorii (strain ATCC VR-613 / Malish 7), this protein is Putative ankyrin repeat protein RC0502.